Consider the following 110-residue polypeptide: uncharacterized protein (110 aa).

The next 3 helical transmembrane spans lie at 5–25 (ILAI…PIHL), 62–82 (FPII…AIVS), and 90–110 (GISI…LISI).

This sequence to A.fulgidus AF1754.

Its subcellular location is the cell membrane. This is an uncharacterized protein from Methanocaldococcus jannaschii (strain ATCC 43067 / DSM 2661 / JAL-1 / JCM 10045 / NBRC 100440) (Methanococcus jannaschii).